The primary structure comprises 101 residues: Small ribosomal subunit protein uS14 (101 aa).

Residues 36–72 (GTDESREAARAGIQRLPRDASPIRVRNRDGIDGRPRG) are disordered. A compositionally biased stretch (basic and acidic residues) spans 61 to 70 (RNRDGIDGRP).

The protein belongs to the universal ribosomal protein uS14 family. Part of the 30S ribosomal subunit. Contacts proteins S3 and S10.

Functionally, binds 16S rRNA, required for the assembly of 30S particles and may also be responsible for determining the conformation of the 16S rRNA at the A site. This chain is Small ribosomal subunit protein uS14, found in Clavibacter michiganensis subsp. michiganensis (strain NCPPB 382).